The following is a 207-amino-acid chain: Large ribosomal subunit protein uL4 (207 aa).

Residues 44–78 form a disordered region; sequence QRQGTHDVKNRSEVRGGGRKPWRQKGTGRARQGSI. Residues 47-59 show a composition bias toward basic and acidic residues; it reads GTHDVKNRSEVRG. Over residues 60–71 the composition is skewed to basic residues; sequence GGRKPWRQKGTG.

Belongs to the universal ribosomal protein uL4 family. In terms of assembly, part of the 50S ribosomal subunit.

In terms of biological role, one of the primary rRNA binding proteins, this protein initially binds near the 5'-end of the 23S rRNA. It is important during the early stages of 50S assembly. It makes multiple contacts with different domains of the 23S rRNA in the assembled 50S subunit and ribosome. Its function is as follows. Forms part of the polypeptide exit tunnel. The chain is Large ribosomal subunit protein uL4 from Brevibacillus brevis (strain 47 / JCM 6285 / NBRC 100599).